The sequence spans 399 residues: Methylthioribose kinase (399 aa).

Residues N40, K57, and 111 to 113 each bind ATP; that span reads EDL. Position 229 (D229) interacts with substrate. Position 246–248 (246–248) interacts with ATP; that stretch reads DAE. R344 provides a ligand contact to substrate.

The protein belongs to the methylthioribose kinase family. Homodimer.

It carries out the reaction 5-(methylsulfanyl)-D-ribose + ATP = 5-(methylsulfanyl)-alpha-D-ribose 1-phosphate + ADP + H(+). Its pathway is amino-acid biosynthesis; L-methionine biosynthesis via salvage pathway; S-methyl-5-thio-alpha-D-ribose 1-phosphate from S-methyl-5'-thioadenosine (hydrolase route): step 2/2. Its function is as follows. Catalyzes the phosphorylation of methylthioribose into methylthioribose-1-phosphate. In Klebsiella pneumoniae subsp. pneumoniae (strain ATCC 700721 / MGH 78578), this protein is Methylthioribose kinase.